The following is a 197-amino-acid chain: 3-isopropylmalate dehydratase small subunit (197 aa).

It belongs to the LeuD family. LeuD type 1 subfamily. As to quaternary structure, heterodimer of LeuC and LeuD.

It carries out the reaction (2R,3S)-3-isopropylmalate = (2S)-2-isopropylmalate. Its pathway is amino-acid biosynthesis; L-leucine biosynthesis; L-leucine from 3-methyl-2-oxobutanoate: step 2/4. In terms of biological role, catalyzes the isomerization between 2-isopropylmalate and 3-isopropylmalate, via the formation of 2-isopropylmaleate. This Mycobacterium sp. (strain JLS) protein is 3-isopropylmalate dehydratase small subunit.